A 259-amino-acid polypeptide reads, in one-letter code: tRNA pseudouridine synthase A (259 aa).

The active-site Nucleophile is aspartate 51. Tyrosine 109 is a binding site for substrate.

The protein belongs to the tRNA pseudouridine synthase TruA family. As to quaternary structure, homodimer.

The catalysed reaction is uridine(38/39/40) in tRNA = pseudouridine(38/39/40) in tRNA. In terms of biological role, formation of pseudouridine at positions 38, 39 and 40 in the anticodon stem and loop of transfer RNAs. This is tRNA pseudouridine synthase A from Nitrosococcus oceani (strain ATCC 19707 / BCRC 17464 / JCM 30415 / NCIMB 11848 / C-107).